Here is a 353-residue protein sequence, read N- to C-terminus: Photosystem II protein D1 (353 aa).

Thr2 carries the post-translational modification N-acetylthreonine. Phosphothreonine is present on Thr2. The next 3 membrane-spanning stretches (helical) occupy residues 29–46, 118–133, and 142–156; these read YIGW…TATS, HFLL…EWEL, and WIAV…AATA. His118 serves as a coordination point for chlorophyll a. Tyr126 contacts pheophytin a. [CaMn4O5] cluster contacts are provided by Asp170 and Glu189. A helical membrane pass occupies residues 197–218; that stretch reads FHMLGVAGVFGGSLFSAMHGSL. His198 provides a ligand contact to chlorophyll a. A quinone is bound by residues His215 and 264-265; that span reads SF. His215 contacts Fe cation. Fe cation is bound at residue His272. A helical transmembrane segment spans residues 274–288; that stretch reads FLAAWPVVGIWFTAL. Residues His332, Glu333, Asp342, and Ala344 each contribute to the [CaMn4O5] cluster site. Positions 345-353 are excised as a propeptide; that stretch reads ALEVPSLNG.

Belongs to the reaction center PufL/M/PsbA/D family. As to quaternary structure, PSII is composed of 1 copy each of membrane proteins PsbA, PsbB, PsbC, PsbD, PsbE, PsbF, PsbH, PsbI, PsbJ, PsbK, PsbL, PsbM, PsbT, PsbX, PsbY, PsbZ, Psb30/Ycf12, at least 3 peripheral proteins of the oxygen-evolving complex and a large number of cofactors. It forms dimeric complexes. The cofactor is The D1/D2 heterodimer binds P680, chlorophylls that are the primary electron donor of PSII, and subsequent electron acceptors. It shares a non-heme iron and each subunit binds pheophytin, quinone, additional chlorophylls, carotenoids and lipids. D1 provides most of the ligands for the Mn4-Ca-O5 cluster of the oxygen-evolving complex (OEC). There is also a Cl(-1) ion associated with D1 and D2, which is required for oxygen evolution. The PSII complex binds additional chlorophylls, carotenoids and specific lipids.. Tyr-161 forms a radical intermediate that is referred to as redox-active TyrZ, YZ or Y-Z. Post-translationally, C-terminally processed by CTPA; processing is essential to allow assembly of the oxygen-evolving complex and thus photosynthetic growth.

The protein resides in the plastid. It is found in the chloroplast thylakoid membrane. The catalysed reaction is 2 a plastoquinone + 4 hnu + 2 H2O = 2 a plastoquinol + O2. In terms of biological role, photosystem II (PSII) is a light-driven water:plastoquinone oxidoreductase that uses light energy to abstract electrons from H(2)O, generating O(2) and a proton gradient subsequently used for ATP formation. It consists of a core antenna complex that captures photons, and an electron transfer chain that converts photonic excitation into a charge separation. The D1/D2 (PsbA/PsbD) reaction center heterodimer binds P680, the primary electron donor of PSII as well as several subsequent electron acceptors. The sequence is that of Photosystem II protein D1 from Oryza nivara (Indian wild rice).